The following is a 326-amino-acid chain: Prenyl transferase nodC (326 aa).

A helical transmembrane segment spans residues 8–28 (LAAVLFSALFSLGVILVHLPW). His-95 lines the isopentenyl diphosphate pocket. Mg(2+) contacts are provided by Asp-102 and Asp-106. Arg-111 is a binding site for dimethylallyl diphosphate. A glycan (N-linked (GlcNAc...) asparagine) is linked at Asn-139. Position 195 (Lys-195) interacts with dimethylallyl diphosphate. An N-linked (GlcNAc...) asparagine glycan is attached at Asn-210.

It belongs to the FPP/GGPP synthase family.

It is found in the membrane. It participates in secondary metabolite biosynthesis. Functionally, cytochrome P450 monooxygenase; part of the gene cluster that mediates the biosynthesis of the indole diterpenes nodulisporic acids (NA). Nodulisporic acid A (NAA) and its chemically modified derivatives are of particular significance because of their highly potent insecticidal activity against blood-feeding arthropods and lack of observable adverse effects on mammals, in particular the tremogenicity associated with the paspaline-derived IDTs is not observed. The geranylgeranyl diphosphate (GGPP) synthase ggs1, localized outside of the cluster, is proposed to catalyze the first step in nodulisporic acid biosynthesis via conversion of farnesyl pyrophosphate and isopentyl pyrophosphate into geranylgeranyl pyrophosphate (GGPP). Condensation of indole-3-glycerol phosphate with GGPP by the prenyl transferase nodC then forms 3-geranylgeranylindole (3-GGI). Epoxidation by the FAD-dependent monooxygenase nodM leads to a single-epoxidized-GGI that is substrate of the terpene cyclase nodB for cyclization to yield emindole SB. The terminal methyl carbon, C28, of emindole SB is then oxidized by the cytochrome P450 monooxygenase nodW to produce nodulisporic acid F (NAF), the pentacyclic core of NAA. NAF is converted to nodulisporic acid E (NAE) via prenylation. This step is probably performed by one of the indole diterpene prenyltransferases nodD1 or nodD2. Several oxidation steps performed by the FAD-linked oxidoreductase nodO and one of the cytochrome P450 monooxygenase nodR, nodX or nodZ further convert NAE to nodulisporic acid D (NAD). NAD is substrate of cytochrome P450 monooxygenase nodJ to produce the precursor of nodulisporic acid C (NAC), converted to NAC by one of the indole diterpene prenyltransferases nodD1 or nodD2. The FAD-dependent monooxygenase nodY2 then oxidizes NAC to nodulisporic acid B (NAB). Finally NAB is converted to NAA by one of the cytochrome P450 monooxygenases nodR, nodX or nodZ. This chain is Prenyl transferase nodC, found in Hypoxylon pulicicidum.